The primary structure comprises 378 residues: Probable cytochrome oxidase subunit 2 (378 aa).

Residues 1–8 (MIDYEFLR) are Cytoplasmic-facing. A helical membrane pass occupies residues 9 to 28 (FIWWVLVIVLLIGFSVTDGF). Residues 29-79 (DMGVTALLPVIGKKEVERRIMINTIAPHWDGNQVWLLTAGGAIFAAWPIVY) lie on the Periplasmic side of the membrane. A helical transmembrane segment spans residues 80–99 (AVSFSGFYIALVLVLAALFL). The Cytoplasmic portion of the chain corresponds to 100 to 122 (RPLGFEYRAKIDNPTWRSVWDWG). The helical transmembrane segment at 123 to 142 (LFAGGFVPALVFGVAFGNLL) threads the bilayer. Residues 143–164 (QGVPFHFNELTQVTYTGSFFEL) lie on the Periplasmic side of the membrane. Residues 165-184 (LNPFALLCGVISLSMLVTHG) form a helical membrane-spanning segment. The Cytoplasmic segment spans residues 185–205 (ANWLQMKTTEALRDRARTVSQ). A helical membrane pass occupies residues 206–224 (IGSIVTLIAFVLAGVWLYS). At 225-261 (KDGYVVTSTIDHFAPSSPMNKEVAVETGAWFRNFNEM) the chain is on the periplasmic side. The helical transmembrane segment at 262-281 (PILWIFPALAVVAALLNAAF) threads the bilayer. Residues 282 to 291 (SKANRCGFAF) lie on the Cytoplasmic side of the membrane. Residues 292-311 (FFSALTMAGVIITAAVSMFP) traverse the membrane as a helical segment. The Periplasmic segment spans residues 312 to 335 (FVMPSSSHPEQSLLMWDSTSSELT). Residues 336–355 (LTLMLIFAVVFVVIALAYTI) traverse the membrane as a helical segment. At 356 to 378 (WSYSKMFGRLDANFIDKNKHSLY) the chain is on the cytoplasmic side.

The protein belongs to the cytochrome ubiquinol oxidase subunit 2 family. As to quaternary structure, heterodimer of subunits I and II.

It is found in the cell inner membrane. In terms of biological role, probable cytochrome oxidase subunit. This Haemophilus influenzae (strain ATCC 51907 / DSM 11121 / KW20 / Rd) protein is Probable cytochrome oxidase subunit 2.